A 648-amino-acid polypeptide reads, in one-letter code: Bifunctional protein TilS/HprT (648 aa).

29–34 (SGGPDS) contacts ATP. Mg(2+) is bound at residue Asp-627.

In the N-terminal section; belongs to the tRNA(Ile)-lysidine synthase family. It in the C-terminal section; belongs to the purine/pyrimidine phosphoribosyltransferase family. Requires Mg(2+) as cofactor.

It localises to the cytoplasm. The enzyme catalyses IMP + diphosphate = hypoxanthine + 5-phospho-alpha-D-ribose 1-diphosphate. It catalyses the reaction GMP + diphosphate = guanine + 5-phospho-alpha-D-ribose 1-diphosphate. The catalysed reaction is cytidine(34) in tRNA(Ile2) + L-lysine + ATP = lysidine(34) in tRNA(Ile2) + AMP + diphosphate + H(+). Ligates lysine onto the cytidine present at position 34 of the AUA codon-specific tRNA(Ile) that contains the anticodon CAU, in an ATP-dependent manner. Cytidine is converted to lysidine, thus changing the amino acid specificity of the tRNA from methionine to isoleucine. This chain is Bifunctional protein TilS/HprT (tilS/hprT), found in Listeria monocytogenes serovar 1/2a (strain ATCC BAA-679 / EGD-e).